We begin with the raw amino-acid sequence, 273 residues long: ATP synthase subunit a (273 aa).

A run of 5 helical transmembrane segments spans residues 44-64 (WHID…WLFY), 104-124 (IAPL…MDLI), 149-169 (DLNV…FYSI), 223-243 (LIFI…SVPW), and 244-264 (AIFH…LTIV).

It belongs to the ATPase A chain family. F-type ATPases have 2 components, CF(1) - the catalytic core - and CF(0) - the membrane proton channel. CF(1) has five subunits: alpha(3), beta(3), gamma(1), delta(1), epsilon(1). CF(0) has three main subunits: a(1), b(2) and c(9-12). The alpha and beta chains form an alternating ring which encloses part of the gamma chain. CF(1) is attached to CF(0) by a central stalk formed by the gamma and epsilon chains, while a peripheral stalk is formed by the delta and b chains.

It localises to the cell inner membrane. In terms of biological role, key component of the proton channel; it plays a direct role in the translocation of protons across the membrane. The sequence is that of ATP synthase subunit a from Shewanella putrefaciens (strain CN-32 / ATCC BAA-453).